The primary structure comprises 23 residues: Augerpeptide hhe7a (23 aa).

3 disulfides stabilise this stretch: C3-C11, C6-C19, and C10-C22.

Expressed by the venom duct.

It localises to the secreted. Functionally, causes abnormal twist followed by immobility when injected into C.elegans. This is Augerpeptide hhe7a from Hastula hectica (Sea snail).